Consider the following 450-residue polypeptide: Phosphoglucosamine mutase (450 aa).

The active-site Phosphoserine intermediate is serine 101. Residues serine 101, aspartate 240, aspartate 242, and aspartate 244 each coordinate Mg(2+). Serine 101 is modified (phosphoserine).

This sequence belongs to the phosphohexose mutase family. Requires Mg(2+) as cofactor. Post-translationally, activated by phosphorylation.

The catalysed reaction is alpha-D-glucosamine 1-phosphate = D-glucosamine 6-phosphate. In terms of biological role, catalyzes the conversion of glucosamine-6-phosphate to glucosamine-1-phosphate. The chain is Phosphoglucosamine mutase from Streptococcus pneumoniae serotype 4 (strain ATCC BAA-334 / TIGR4).